Reading from the N-terminus, the 170-residue chain is Probable T4-type lysozyme 1 (170 aa).

E13 serves as the catalytic Proton donor. The Nucleophile role is filled by D22.

This sequence belongs to the glycosyl hydrolase 24 family.

It carries out the reaction Hydrolysis of (1-&gt;4)-beta-linkages between N-acetylmuramic acid and N-acetyl-D-glucosamine residues in a peptidoglycan and between N-acetyl-D-glucosamine residues in chitodextrins.. This is Probable T4-type lysozyme 1 from Dictyostelium discoideum (Social amoeba).